An 815-amino-acid polypeptide reads, in one-letter code: Tubulin polyglutamylase TTLL13 (815 aa).

Positions 85 to 430 (RRSLAINLTN…RGCDKRKVME (346 aa)) constitute a TTL domain. Residues lysine 202, 208–209 (QG), 230–233 (QQYI), and 243–245 (KFD) each bind ATP. Glutamine 208 serves as a coordination point for a protein. Arginine 269 provides a ligand contact to L-glutamate. An ATP-binding site is contributed by 291-292 (TN). The L-glutamate site is built by tyrosine 293 and lysine 311. The Mg(2+) site is built by aspartate 376, glutamate 389, and asparagine 391. The interval 401–482 (CLDQEVKDAL…LGKYRRIYPG (82 aa)) is c-MTBD region. Lysine 407 serves as a coordination point for L-glutamate. A coiled-coil region spans residues 504 to 528 (ASKAREECARQQLEEIRLKQEQQET). The interval 520-556 (RLKQEQQETSGTKRQKARDQNQGESAGEKSRPRAGLQ) is disordered. The segment covering 536 to 550 (ARDQNQGESAGEKSR) has biased composition (basic and acidic residues).

It belongs to the tubulin--tyrosine ligase family. Mg(2+) is required as a cofactor.

It carries out the reaction (L-glutamyl)(n)-gamma-L-glutamyl-L-glutamyl-[protein] + L-glutamate + ATP = (L-glutamyl)(n+1)-gamma-L-glutamyl-L-glutamyl-[protein] + ADP + phosphate + H(+). Functionally, polyglutamylase which modifies tubulin, generating polyglutamate side chains of variable lengths on the gamma-carboxyl group of specific glutamate residues within the C-terminal tail of tubulin. Mediates ATP-dependent polyglutamate side-chain elongation of the polyglutamylation reaction but not the initiation step. Preferentially modifies the alpha-tubulin tail over a beta-tail. The chain is Tubulin polyglutamylase TTLL13 from Homo sapiens (Human).